The following is a 343-amino-acid chain: MIKLSNITKVFHQGTRTIQALNNVSLHVPAGQIYGVIGASGAGKSTLIRCVNLLERPTEGSVLVDGQELTTLSESELTKARRQIGMIFQHFNLLSSRTVFGNVALPLELDNTPKDEIKRRVTELLSLVGLGDKHDSYPSNLSGGQKQRVAIARALASNPKVLLCDEATSALDPATTRSILELLKDINRRLGLTILLITHEMDVVKRICDCVAVISNGELIEQDTVSEVFSHPKTPLAQKFIQSTLHLDIPEDYQERLQAEPFADCVPMLRLEFTGQSVDAPLLSETARRFNVNNNIISAQMDYAGGVKFGIMLTEMHGTQQDTQAAIAWLQEHHVKVEVLGYV.

One can recognise an ABC transporter domain in the interval 2–241 (IKLSNITKVF…PKTPLAQKFI (240 aa)). 38 to 45 (GASGAGKS) serves as a coordination point for ATP.

Belongs to the ABC transporter superfamily. Methionine importer (TC 3.A.1.24) family. In terms of assembly, the complex is composed of two ATP-binding proteins (MetN), two transmembrane proteins (MetI) and a solute-binding protein (MetQ).

The protein localises to the cell inner membrane. The enzyme catalyses L-methionine(out) + ATP + H2O = L-methionine(in) + ADP + phosphate + H(+). It catalyses the reaction D-methionine(out) + ATP + H2O = D-methionine(in) + ADP + phosphate + H(+). Functionally, part of the ABC transporter complex MetNIQ involved in methionine import. Responsible for energy coupling to the transport system. This chain is Methionine import ATP-binding protein MetN, found in Escherichia coli O6:K15:H31 (strain 536 / UPEC).